Reading from the N-terminus, the 156-residue chain is Small ribosomal subunit protein uS7 (156 aa).

It belongs to the universal ribosomal protein uS7 family. As to quaternary structure, part of the 30S ribosomal subunit. Contacts proteins S9 and S11.

Its function is as follows. One of the primary rRNA binding proteins, it binds directly to 16S rRNA where it nucleates assembly of the head domain of the 30S subunit. Is located at the subunit interface close to the decoding center, probably blocks exit of the E-site tRNA. The chain is Small ribosomal subunit protein uS7 from Oleidesulfovibrio alaskensis (strain ATCC BAA-1058 / DSM 17464 / G20) (Desulfovibrio alaskensis).